Reading from the N-terminus, the 450-residue chain is UDP-N-acetylmuramoylalanine--D-glutamate ligase (450 aa).

119–125 (GSNGKTT) contacts ATP.

It belongs to the MurCDEF family.

Its subcellular location is the cytoplasm. It carries out the reaction UDP-N-acetyl-alpha-D-muramoyl-L-alanine + D-glutamate + ATP = UDP-N-acetyl-alpha-D-muramoyl-L-alanyl-D-glutamate + ADP + phosphate + H(+). The protein operates within cell wall biogenesis; peptidoglycan biosynthesis. Cell wall formation. Catalyzes the addition of glutamate to the nucleotide precursor UDP-N-acetylmuramoyl-L-alanine (UMA). This chain is UDP-N-acetylmuramoylalanine--D-glutamate ligase, found in Streptococcus pneumoniae (strain CGSP14).